A 124-amino-acid chain; its full sequence is Riboflavin kinase (124 aa).

A CDP-binding site is contributed by 10–15; that stretch reads GLGKAA. Mg(2+)-binding residues include threonine 39 and asparagine 41. Residues threonine 93 and glutamate 101 each coordinate FMN. 106-109 contacts CDP; the sequence is DKLR.

This sequence belongs to the archaeal riboflavin kinase family. Mg(2+) serves as cofactor.

The enzyme catalyses riboflavin + CTP = CDP + FMN + H(+). The protein operates within cofactor biosynthesis; FMN biosynthesis; FMN from riboflavin (CTP route): step 1/1. In terms of biological role, catalyzes the CTP-dependent phosphorylation of riboflavin (vitamin B2) to form flavin mononucleotide (FMN). This Methanobrevibacter smithii (strain ATCC 35061 / DSM 861 / OCM 144 / PS) protein is Riboflavin kinase.